Here is a 304-residue protein sequence, read N- to C-terminus: Fluoroacetate dehalogenase (304 aa).

The region spanning 26 to 151 (PALLLLHGFP…FVARAYWHWY (126 aa)) is the AB hydrolase-1 domain. Aspartate 104 functions as the Nucleophile in the catalytic mechanism. Fluoroacetate-binding residues include arginine 105, arginine 108, histidine 149, tryptophan 150, and tyrosine 212. Histidine 271 (proton acceptor) is an active-site residue.

The protein belongs to the AB hydrolase superfamily. Epoxide hydrolase family. In terms of assembly, homodimer.

The enzyme catalyses a haloacetate + H2O = a halide anion + glycolate + H(+). It catalyses the reaction fluoroacetate + H2O = fluoride + glycolate + H(+). In terms of biological role, catalyzes the hydrolytic defluorination of fluoroacetate to produce glycolate. Has only very low activity towards chloroacetate and bromoacetate. The protein is Fluoroacetate dehalogenase (fac-dex) of Burkholderia sp.